Consider the following 321-residue polypeptide: Anthranilate phosphoribosyltransferase (321 aa).

5-phospho-alpha-D-ribose 1-diphosphate is bound by residues Gly-72, 75-76 (GD), Thr-80, 82-85 (NVST), 99-107 (KHGNVSVTS), and Ser-111. Gly-72 contributes to the anthranilate binding site. Ser-84 is a Mg(2+) binding site. Residue Asn-102 participates in anthranilate binding. Arg-157 contacts anthranilate. Residues Asp-216 and Glu-217 each contribute to the Mg(2+) site.

This sequence belongs to the anthranilate phosphoribosyltransferase family. In terms of assembly, homodimer. Mg(2+) serves as cofactor.

It carries out the reaction N-(5-phospho-beta-D-ribosyl)anthranilate + diphosphate = 5-phospho-alpha-D-ribose 1-diphosphate + anthranilate. It functions in the pathway amino-acid biosynthesis; L-tryptophan biosynthesis; L-tryptophan from chorismate: step 2/5. In terms of biological role, catalyzes the transfer of the phosphoribosyl group of 5-phosphorylribose-1-pyrophosphate (PRPP) to anthranilate to yield N-(5'-phosphoribosyl)-anthranilate (PRA). The polypeptide is Anthranilate phosphoribosyltransferase (Methanococcus vannielii (strain ATCC 35089 / DSM 1224 / JCM 13029 / OCM 148 / SB)).